Here is a 352-residue protein sequence, read N- to C-terminus: Glycerol-3-phosphate dehydrogenase [NAD(P)+] (352 aa).

Serine 11, tryptophan 12, arginine 32, and lysine 105 together coordinate NADPH. Positions 105, 133, and 135 each coordinate sn-glycerol 3-phosphate. Alanine 137 contacts NADPH. Residues lysine 188, aspartate 241, serine 251, arginine 252, and asparagine 253 each coordinate sn-glycerol 3-phosphate. The active-site Proton acceptor is lysine 188. Position 252 (arginine 252) interacts with NADPH. NADPH-binding residues include valine 276 and glutamate 278.

It belongs to the NAD-dependent glycerol-3-phosphate dehydrogenase family.

The protein resides in the cytoplasm. The catalysed reaction is sn-glycerol 3-phosphate + NAD(+) = dihydroxyacetone phosphate + NADH + H(+). It catalyses the reaction sn-glycerol 3-phosphate + NADP(+) = dihydroxyacetone phosphate + NADPH + H(+). Its pathway is membrane lipid metabolism; glycerophospholipid metabolism. Catalyzes the reduction of the glycolytic intermediate dihydroxyacetone phosphate (DHAP) to sn-glycerol 3-phosphate (G3P), the key precursor for phospholipid synthesis. The polypeptide is Glycerol-3-phosphate dehydrogenase [NAD(P)+] (Desulfitobacterium hafniense (strain Y51)).